We begin with the raw amino-acid sequence, 447 residues long: Tektin-4 (447 aa).

3 coiled-coil regions span residues 114–143 (KSEL…RALD), 324–348 (KILS…DKEA), and 375–423 (FRLM…TNSL).

The protein belongs to the tektin family. In terms of assembly, microtubule inner protein component of sperm flagellar doublet microtubules. Ubiquitinated, leading to its degradation. Deubiquitinated by USP16, promoting its stability.

The protein localises to the cytoplasm. Its subcellular location is the cytoskeleton. The protein resides in the cilium axoneme. It localises to the flagellum axoneme. In terms of biological role, microtubule inner protein (MIP) part of the dynein-decorated doublet microtubules (DMTs) in cilia and flagellar axoneme. Forms filamentous polymers in the walls of ciliary and flagellar microtubules. Contributes to normal sperm motility. This is Tektin-4 (Tekt4) from Rattus norvegicus (Rat).